A 370-amino-acid polypeptide reads, in one-letter code: Polygalacturonase 1 (370 aa).

Positions 1–18 are cleaved as a signal peptide; it reads MRTSILSMLALGAAAVSA. The cysteines at positions 36 and 51 are disulfide-linked. 5 PbH1 repeats span residues 163–194, 195–216, 217–237, 246–267, and 275–297; these read ADNLVLDHITIDNTDGDKTNGGHNTDAFDVGE, STYITISNANIKNQDDCLAINS, GENIIFTGGTCSGGHGLSIGS, VKNVTISDSTVSNSDNGIRIKT, and VADVTFSNIELSNIAKYGIVIEQ. Catalysis depends on D209, which acts as the Proton donor. A disulfide bridge links C211 with C227. The active site involves H231. N248 carries N-linked (GlcNAc...) asparagine glycosylation. Cystine bridges form between C337/C342 and C361/C370.

It belongs to the glycosyl hydrolase 28 family.

It localises to the secreted. It carries out the reaction (1,4-alpha-D-galacturonosyl)n+m + H2O = (1,4-alpha-D-galacturonosyl)n + (1,4-alpha-D-galacturonosyl)m.. The protein is Polygalacturonase 1 (PG1) of Penicillium olsonii.